The sequence spans 333 residues: Glycerol-3-phosphate dehydrogenase [NAD(P)+] (333 aa).

NADPH-binding residues include Ser-10, Trp-11, His-31, Arg-32, and Lys-105. Sn-glycerol 3-phosphate contacts are provided by Lys-105, Gly-136, and Ser-138. NADPH is bound at residue Ala-140. Positions 191, 244, 254, 255, and 256 each coordinate sn-glycerol 3-phosphate. The active-site Proton acceptor is the Lys-191. Arg-255 contacts NADPH. 2 residues coordinate NADPH: Ile-279 and Glu-281.

Belongs to the NAD-dependent glycerol-3-phosphate dehydrogenase family.

Its subcellular location is the cytoplasm. It carries out the reaction sn-glycerol 3-phosphate + NAD(+) = dihydroxyacetone phosphate + NADH + H(+). The enzyme catalyses sn-glycerol 3-phosphate + NADP(+) = dihydroxyacetone phosphate + NADPH + H(+). It participates in membrane lipid metabolism; glycerophospholipid metabolism. Catalyzes the reduction of the glycolytic intermediate dihydroxyacetone phosphate (DHAP) to sn-glycerol 3-phosphate (G3P), the key precursor for phospholipid synthesis. In Chlorobium luteolum (strain DSM 273 / BCRC 81028 / 2530) (Pelodictyon luteolum), this protein is Glycerol-3-phosphate dehydrogenase [NAD(P)+].